A 391-amino-acid chain; its full sequence is 3-ketoacyl-CoA thiolase (391 aa).

Cysteine 95 acts as the Acyl-thioester intermediate in catalysis. Residues histidine 347 and cysteine 377 each act as proton acceptor in the active site.

This sequence belongs to the thiolase-like superfamily. Thiolase family. Heterotetramer of two alpha chains (FadB) and two beta chains (FadA).

It localises to the cytoplasm. It catalyses the reaction an acyl-CoA + acetyl-CoA = a 3-oxoacyl-CoA + CoA. Its pathway is lipid metabolism; fatty acid beta-oxidation. Functionally, catalyzes the final step of fatty acid oxidation in which acetyl-CoA is released and the CoA ester of a fatty acid two carbons shorter is formed. The chain is 3-ketoacyl-CoA thiolase from Pseudomonas putida (strain ATCC 700007 / DSM 6899 / JCM 31910 / BCRC 17059 / LMG 24140 / F1).